The following is a 387-amino-acid chain: Sedoheptulose-1,7-bisphosphatase, chloroplastic (387 aa).

C109 and C114 are oxidised to a cystine. D120, E149, D170, L172, and D173 together coordinate Mg(2+). Substrate-binding positions include 173 to 176, Y284, and K314; that span reads DGSS. Residue E320 participates in Mg(2+) binding.

It belongs to the FBPase class 1 family. Homodimer. It depends on Mg(2+) as a cofactor.

The protein localises to the plastid. The protein resides in the chloroplast. It carries out the reaction D-sedoheptulose 1,7-bisphosphate + H2O = D-sedoheptulose 7-phosphate + phosphate. It participates in carbohydrate biosynthesis; Calvin cycle. This Spinacia oleracea (Spinach) protein is Sedoheptulose-1,7-bisphosphatase, chloroplastic.